Reading from the N-terminus, the 198-residue chain is Ribonuclease HII (198 aa).

The region spanning 10–198 is the RNase H type-2 domain; it reads QLVAGVDEVG…PVKRALGLAS (189 aa). A divalent metal cation-binding residues include Asp-16, Glu-17, and Asp-108.

This sequence belongs to the RNase HII family. Mn(2+) serves as cofactor. The cofactor is Mg(2+).

The protein localises to the cytoplasm. It carries out the reaction Endonucleolytic cleavage to 5'-phosphomonoester.. Endonuclease that specifically degrades the RNA of RNA-DNA hybrids. This is Ribonuclease HII from Escherichia coli O6:H1 (strain CFT073 / ATCC 700928 / UPEC).